The chain runs to 308 residues: N-acetylmuramic acid 6-phosphate etherase (308 aa).

The region spanning 63–226 is the SIS domain; sequence IVDAFACGGR…STASMIRSGK (164 aa). Residue E91 is the Proton donor of the active site. E122 is an active-site residue.

It belongs to the GCKR-like family. MurNAc-6-P etherase subfamily. Homodimer.

The enzyme catalyses N-acetyl-D-muramate 6-phosphate + H2O = N-acetyl-D-glucosamine 6-phosphate + (R)-lactate. It functions in the pathway amino-sugar metabolism; 1,6-anhydro-N-acetylmuramate degradation. The protein operates within amino-sugar metabolism; N-acetylmuramate degradation. It participates in cell wall biogenesis; peptidoglycan recycling. In terms of biological role, specifically catalyzes the cleavage of the D-lactyl ether substituent of MurNAc 6-phosphate, producing GlcNAc 6-phosphate and D-lactate. Together with AnmK, is also required for the utilization of anhydro-N-acetylmuramic acid (anhMurNAc) either imported from the medium or derived from its own cell wall murein, and thus plays a role in cell wall recycling. In Colwellia psychrerythraea (strain 34H / ATCC BAA-681) (Vibrio psychroerythus), this protein is N-acetylmuramic acid 6-phosphate etherase.